Reading from the N-terminus, the 291-residue chain is T-cell leukemia homeobox protein 3 (291 aa).

A disordered region spans residues 1 to 51 (MEAPASAQTPHPHEPISFGIDQILNSPDQDSAPAPRGPDGASYLGGPPGGR). The homeobox DNA-binding region spans 166–225 (RKKPRTSFSRVQICELEKRFHRQKYLASAERAALAKSLKMTDAQVKTWFQNRRTKWRRQT).

The protein localises to the nucleus. The sequence is that of T-cell leukemia homeobox protein 3 (Tlx3) from Mus musculus (Mouse).